The chain runs to 580 residues: 2-isopropylmalate synthase (580 aa).

Residues 1–11 (MSATAFPTLST) are compositionally biased toward polar residues. The disordered stretch occupies residues 1 to 37 (MSATAFPTLSTPAGEIPATAPAWNRQRRSQMPSHRYR). Residues 61–334 (PLWVPVDLRD…DPMIDFSDID (274 aa)) enclose the Pyruvate carboxyltransferase domain. Positions 70, 273, 275, and 309 each coordinate Mg(2+). The segment at 476 to 580 (EGEADAPQAD…ARAVAEVRPG (105 aa)) is regulatory domain.

The protein belongs to the alpha-IPM synthase/homocitrate synthase family. LeuA type 2 subfamily. In terms of assembly, homodimer. Requires Mg(2+) as cofactor.

The protein resides in the cytoplasm. It catalyses the reaction 3-methyl-2-oxobutanoate + acetyl-CoA + H2O = (2S)-2-isopropylmalate + CoA + H(+). Its pathway is amino-acid biosynthesis; L-leucine biosynthesis; L-leucine from 3-methyl-2-oxobutanoate: step 1/4. In terms of biological role, catalyzes the condensation of the acetyl group of acetyl-CoA with 3-methyl-2-oxobutanoate (2-ketoisovalerate) to form 3-carboxy-3-hydroxy-4-methylpentanoate (2-isopropylmalate). In Nocardia farcinica (strain IFM 10152), this protein is 2-isopropylmalate synthase.